Here is an 88-residue protein sequence, read N- to C-terminus: Small ribosomal subunit protein uS15c (88 aa).

The protein belongs to the universal ribosomal protein uS15 family. Part of the 30S ribosomal subunit.

The protein resides in the plastid. The protein localises to the chloroplast. This chain is Small ribosomal subunit protein uS15c (rps15), found in Draba nemorosa (Woodland whitlowgrass).